The following is a 284-amino-acid chain: Shikimate dehydrogenase (NADP(+)) (284 aa).

Shikimate contacts are provided by residues 20–22 (SIS) and Ser-67. Lys-71 serves as the catalytic Proton acceptor. Asp-83 is a binding site for NADP(+). Shikimate-binding residues include Asn-92 and Asp-107. NADP(+)-binding positions include 129–133 (GAGGA) and Ile-227. Shikimate is bound at residue Tyr-229. Gly-250 lines the NADP(+) pocket.

It belongs to the shikimate dehydrogenase family. As to quaternary structure, homodimer.

The catalysed reaction is shikimate + NADP(+) = 3-dehydroshikimate + NADPH + H(+). Its pathway is metabolic intermediate biosynthesis; chorismate biosynthesis; chorismate from D-erythrose 4-phosphate and phosphoenolpyruvate: step 4/7. Involved in the biosynthesis of the chorismate, which leads to the biosynthesis of aromatic amino acids. Catalyzes the reversible NADPH linked reduction of 3-dehydroshikimate (DHSA) to yield shikimate (SA). The sequence is that of Shikimate dehydrogenase (NADP(+)) from Streptococcus pneumoniae (strain 70585).